The sequence spans 260 residues: Proteasome subunit alpha (260 aa).

The protein belongs to the peptidase T1A family. In terms of assembly, the 20S proteasome core is composed of 14 alpha and 14 beta subunits that assemble into four stacked heptameric rings, resulting in a barrel-shaped structure. The two inner rings, each composed of seven catalytic beta subunits, are sandwiched by two outer rings, each composed of seven alpha subunits. The catalytic chamber with the active sites is on the inside of the barrel. Has a gated structure, the ends of the cylinder being occluded by the N-termini of the alpha-subunits. Is capped at one or both ends by the proteasome regulatory ATPase, PAN.

Its subcellular location is the cytoplasm. Its activity is regulated as follows. The formation of the proteasomal ATPase PAN-20S proteasome complex, via the docking of the C-termini of PAN into the intersubunit pockets in the alpha-rings, triggers opening of the gate for substrate entry. Interconversion between the open-gate and close-gate conformations leads to a dynamic regulation of the 20S proteasome proteolysis activity. Component of the proteasome core, a large protease complex with broad specificity involved in protein degradation. This Thermococcus kodakarensis (strain ATCC BAA-918 / JCM 12380 / KOD1) (Pyrococcus kodakaraensis (strain KOD1)) protein is Proteasome subunit alpha.